Consider the following 190-residue polypeptide: Acireductone dioxygenase (190 aa).

The Fe(2+) site is built by His-101, His-103, Glu-107, and His-145. Ni(2+)-binding residues include His-101, His-103, Glu-107, and His-145.

Belongs to the acireductone dioxygenase (ARD) family. In terms of assembly, monomer. The cofactor is Fe(2+). Ni(2+) is required as a cofactor.

It catalyses the reaction 1,2-dihydroxy-5-(methylsulfanyl)pent-1-en-3-one + O2 = 3-(methylsulfanyl)propanoate + CO + formate + 2 H(+). It carries out the reaction 1,2-dihydroxy-5-(methylsulfanyl)pent-1-en-3-one + O2 = 4-methylsulfanyl-2-oxobutanoate + formate + 2 H(+). Its pathway is amino-acid biosynthesis; L-methionine biosynthesis via salvage pathway; L-methionine from S-methyl-5-thio-alpha-D-ribose 1-phosphate: step 5/6. Its function is as follows. Catalyzes 2 different reactions between oxygen and the acireductone 1,2-dihydroxy-3-keto-5-methylthiopentene (DHK-MTPene) depending upon the metal bound in the active site. Fe-containing acireductone dioxygenase (Fe-ARD) produces formate and 2-keto-4-methylthiobutyrate (KMTB), the alpha-ketoacid precursor of methionine in the methionine recycle pathway. Ni-containing acireductone dioxygenase (Ni-ARD) produces methylthiopropionate, carbon monoxide and formate, and does not lie on the methionine recycle pathway. This Saccharopolyspora erythraea (strain ATCC 11635 / DSM 40517 / JCM 4748 / NBRC 13426 / NCIMB 8594 / NRRL 2338) protein is Acireductone dioxygenase.